We begin with the raw amino-acid sequence, 302 residues long: L-threonate dehydrogenase (302 aa).

Residues 7-35 (FHVG…TWGA) and threonine 102 each bind NAD(+). Lysine 178 is a catalytic residue. Lysine 246 contacts NAD(+).

Belongs to the HIBADH-related family. L-threonate dehydrogenase subfamily.

It carries out the reaction L-threonate + NAD(+) = 2-dehydro-L-erythronate + NADH + H(+). In terms of biological role, catalyzes oxidation of L-threonate to 2-oxo-tetronate. Can use either NAD(+) or NADP(+) as cosubstrate, with a preference for NAD(+). The chain is L-threonate dehydrogenase from Escherichia coli O6:H1 (strain CFT073 / ATCC 700928 / UPEC).